We begin with the raw amino-acid sequence, 660 residues long: MSSKVQQEIADLKKLIRKWDKEYYVDSLPSVEDFVYDKHILRLQELESKYPEYKTLDSPTLKFGSDLLNDFKEVEHSAPILSLDKVYDLDLLKSWIDKIDFNNSFNISVEPKIDGCSIVLYYKDGVLEKALTRGNGKFGNDVTINVRTIRYIPLFLDEKVDLVLRGEVYITKENFLKINKFLEKPYTNSRNLASGILRRVDSREVANFPLNIFIYDFLNAGLEFKTNDLATARLKKLGFKVNPLIRFFDLKNSIGEVLNYIADIIKKRDSFEYEIDGVVLKVSDFALRERLGYTAHHPKWAMAYKFEALSDFSRVNSIVVQVGRSGKITPVANIDKVFVSGAFITSATLHNQDYIRSIGLNVGDVVKVSRRGDVIPAVEMVINKFSTGFFKVPDNCPACKTAVVKEGAHFFCPNNNCPSVAVERIKYFCSKNCMDIEGFSDKIISFLFEKKFIFSEIDLYTFDFYKLLEFKGFKDRKINNLINSIEASKKKPFSKLLLSMGIKDLGENTIMLLFLNNLNSFSKLFKLCQDRYFAFSTLLKIKGIGEKIALNIIEAFNDSVMLNKFKFFENLEFKMEEVVAIDGENKLLAGKKFCITGTFNGYSRSIVIDKLKNKGAIFNTCVTGSLDFLIVGEKAGSKLKKALSLNIKIMSFEDIKSYLD.

NAD(+)-binding positions include 33-37 (DFVYD), 82-83 (SL), and Glu110. The N6-AMP-lysine intermediate role is filled by Lys112. NAD(+)-binding residues include Arg133, Glu167, Lys281, and Lys305. Cys396, Cys399, Cys412, and Cys417 together coordinate Zn(2+). A BRCT domain is found at 583–660 (GENKLLAGKK…SFEDIKSYLD (78 aa)).

The protein belongs to the NAD-dependent DNA ligase family. LigA subfamily. The cofactor is Mg(2+). It depends on Mn(2+) as a cofactor.

The enzyme catalyses NAD(+) + (deoxyribonucleotide)n-3'-hydroxyl + 5'-phospho-(deoxyribonucleotide)m = (deoxyribonucleotide)n+m + AMP + beta-nicotinamide D-nucleotide.. Its function is as follows. DNA ligase that catalyzes the formation of phosphodiester linkages between 5'-phosphoryl and 3'-hydroxyl groups in double-stranded DNA using NAD as a coenzyme and as the energy source for the reaction. It is essential for DNA replication and repair of damaged DNA. This Borreliella burgdorferi (strain ZS7) (Borrelia burgdorferi) protein is DNA ligase.